The chain runs to 418 residues: D-amino acid dehydrogenase (418 aa).

Val-3 to Trp-17 is a binding site for FAD.

Belongs to the DadA oxidoreductase family. The cofactor is FAD.

It carries out the reaction a D-alpha-amino acid + A + H2O = a 2-oxocarboxylate + AH2 + NH4(+). The protein operates within amino-acid degradation; D-alanine degradation; NH(3) and pyruvate from D-alanine: step 1/1. Functionally, oxidative deamination of D-amino acids. The protein is D-amino acid dehydrogenase of Neisseria meningitidis serogroup C / serotype 2a (strain ATCC 700532 / DSM 15464 / FAM18).